The chain runs to 83 residues: Apolipoprotein C-I, acidic form (83 aa).

A signal peptide spans 1 to 26 (MRLFLSLPVLVVVLSMVLEGPAPAQG).

Belongs to the apolipoprotein C1 family.

The protein resides in the secreted. This Pan troglodytes (Chimpanzee) protein is Apolipoprotein C-I, acidic form (APOC1A).